Reading from the N-terminus, the 390-residue chain is Ketoisovalerate reductase BEA2 (390 aa).

70 to 75 provides a ligand contact to NADP(+); the sequence is GPGNIG. The Proton donor role is filled by Lys-285. Asn-289 and Asn-293 together coordinate substrate.

It belongs to the ketopantoate reductase family.

It catalyses the reaction (R)-2-hydroxy-3-methylbutanoate + NADP(+) = 3-methyl-2-oxobutanoate + NADPH + H(+). With respect to regulation, the reductase activity is increased by Mg(2+) (195%), Ca(2+) (169%) and slightly increased by K(+) (123%). The reduction activity is inhibited by Fe(2+) and Co(2+), and almost totally inhibited by Cu(2+), Mn(2+), Zn(2+) and Fe(3+) (from 3% to 9% residual activity respectively). The chelating agent EDTA had little effect, suggesting Mg(2+) and Ca(2+) are not determining factors, though they could promote the reductase enzyme activity. Ketoisovalerate reductase; part of the gene cluster that mediates the biosynthesis of beauvericin (BEA), a non-ribosomal cyclic hexadepsipeptide that shows antibiotic, antifungal, insecticidal, and cancer cell antiproliferative and antihaptotactic activity. Ketoisovalerate reductase BEA2 catalyzes the NADPH-specific reduction of ketoisovaleric acid to hydroxyisovalerate, a precursor for beauvericin biosynthesis. The nonribosomal cyclodepsipeptide synthetase BEA1 then catalyzes the formation of beauvericin via condensation and cyclization of 3 dipeptidol monomers, each composed of one unit of hydroxyisovalerate and one unit of N-methyl-phenylalanine. This chain is Ketoisovalerate reductase BEA2, found in Gibberella intermedia (Bulb rot disease fungus).